Here is a 543-residue protein sequence, read N- to C-terminus: Probable ubiquitin-conjugating enzyme E2 26 (543 aa).

The interval 1–21 is disordered; the sequence is MEPDVVEIPPPPLIASGSRTR. The UBC core domain occupies 271–431; it reads NWVKKVQADW…VFLLSLKTMV (161 aa). Cysteine 357 (glycyl thioester intermediate) is an active-site residue. Residues 514–543 are disordered; the sequence is LAEKPEPPMSNANTENQSKKKTRKRSRSSR. Over residues 532 to 543 the composition is skewed to basic residues; it reads KKKTRKRSRSSR.

The protein belongs to the ubiquitin-conjugating enzyme family.

The enzyme catalyses S-ubiquitinyl-[E1 ubiquitin-activating enzyme]-L-cysteine + [E2 ubiquitin-conjugating enzyme]-L-cysteine = [E1 ubiquitin-activating enzyme]-L-cysteine + S-ubiquitinyl-[E2 ubiquitin-conjugating enzyme]-L-cysteine.. The protein operates within protein modification; protein ubiquitination. Accepts the ubiquitin from the E1 complex and catalyzes its covalent attachment to other proteins. The chain is Probable ubiquitin-conjugating enzyme E2 26 (UBC26) from Arabidopsis thaliana (Mouse-ear cress).